Reading from the N-terminus, the 835-residue chain is Protein translocase subunit SecA 1 (835 aa).

Residues Q85, G103 to T107, and D492 contribute to the ATP site. The segment at V788–V807 is disordered. Residues C819, C821, C830, and C831 each contribute to the Zn(2+) site.

It belongs to the SecA family. In terms of assembly, monomer and homodimer. Part of the essential Sec protein translocation apparatus which comprises SecA, SecYEG and auxiliary proteins SecDF. Other proteins may also be involved. Requires Zn(2+) as cofactor.

The protein localises to the cell membrane. It is found in the cytoplasm. The catalysed reaction is ATP + H2O + cellular proteinSide 1 = ADP + phosphate + cellular proteinSide 2.. Part of the Sec protein translocase complex. Interacts with the SecYEG preprotein conducting channel. Has a central role in coupling the hydrolysis of ATP to the transfer of proteins into and across the cell membrane, serving as an ATP-driven molecular motor driving the stepwise translocation of polypeptide chains across the membrane. The sequence is that of Protein translocase subunit SecA 1 from Bacillus thuringiensis subsp. konkukian (strain 97-27).